Reading from the N-terminus, the 215-residue chain is MGKVYDWFEERLEIQAIADDVTSKYVPPHVNIFYCLGGITLTCFLVQVATGFAMTFYYRPTVTEAFASVQYLMTDVNFGWLIRSVHRWSASMMVLMMILHVFRVYLTGGFKKPRELTWVTGVILAVLTVSFGVTGYSLPWDQVGYWAVKIVTGVPEAIPVIGSPLVELLRGSVSVGQSTLTRFYSLHTFVLPLLTAVFMLMHFLMIRKQGISGPL.

The chain crosses the membrane as a helical span at residues 32–52 (IFYCLGGITLTCFLVQVATGF). C35 serves as a coordination point for heme c. 2 residues coordinate heme b: H86 and H100. The next 3 membrane-spanning stretches (helical) occupy residues 90 to 110 (ASMM…TGGF), 116 to 136 (LTWV…VTGY), and 186 to 206 (LHTF…FLMI). The heme b site is built by H187 and H202.

It belongs to the cytochrome b family. PetB subfamily. As to quaternary structure, the 4 large subunits of the cytochrome b6-f complex are cytochrome b6, subunit IV (17 kDa polypeptide, PetD), cytochrome f and the Rieske protein, while the 4 small subunits are PetG, PetL, PetM and PetN. The complex functions as a dimer. Heme b serves as cofactor. The cofactor is heme c.

The protein resides in the plastid. The protein localises to the chloroplast thylakoid membrane. In terms of biological role, component of the cytochrome b6-f complex, which mediates electron transfer between photosystem II (PSII) and photosystem I (PSI), cyclic electron flow around PSI, and state transitions. The chain is Cytochrome b6 from Klebsormidium bilatum (Filamentous green alga).